A 139-amino-acid chain; its full sequence is Protein archease (139 aa).

D12, D138, and I139 together coordinate Ca(2+).

It belongs to the archease family.

In terms of biological role, activates the tRNA-splicing ligase complex by facilitating the enzymatic turnover of catalytic subunit RtcB. Acts by promoting the guanylylation of RtcB, a key intermediate step in tRNA ligation. Can also alter the NTP specificity of RtcB such that ATP, dGTP or ITP is used efficiently. The polypeptide is Protein archease (Saccharolobus islandicus (strain Y.G.57.14 / Yellowstone #1) (Sulfolobus islandicus)).